Consider the following 433-residue polypeptide: Acetylcholine receptor-like protein cup-4 (433 aa).

The N-terminal stretch at 1–24 is a signal peptide; the sequence is MKIIIFVCFILIFYLPIQKKHVNS. Residues asparagine 41 and asparagine 68 are each glycosylated (N-linked (GlcNAc...) asparagine). The cysteines at positions 178 and 192 are disulfide-linked. Asparagine 237 and asparagine 249 each carry an N-linked (GlcNAc...) asparagine glycan. A run of 4 helical transmembrane segments spans residues 282-302, 307-327, 337-357, and 413-433; these read EAAV…TFFI, STFL…HDLV, IPFC…TLVL, and PIIG…CLLL.

It belongs to the ligand-gated ion channel (TC 1.A.9) family. Acetylcholine receptor (TC 1.A.9.1) subfamily. Expressed in coelomocytes.

It localises to the cytoplasmic vesicle membrane. Thought to regulate endocytosis in coelomocytes through modulation of phospholipase C activity. Possible acetylcholine receptor. In Caenorhabditis elegans, this protein is Acetylcholine receptor-like protein cup-4 (cup-4).